We begin with the raw amino-acid sequence, 230 residues long: Large ribosomal subunit protein uL1 (230 aa).

Belongs to the universal ribosomal protein uL1 family. In terms of assembly, part of the 50S ribosomal subunit.

Functionally, binds directly to 23S rRNA. The L1 stalk is quite mobile in the ribosome, and is involved in E site tRNA release. Its function is as follows. Protein L1 is also a translational repressor protein, it controls the translation of the L11 operon by binding to its mRNA. This Chromohalobacter salexigens (strain ATCC BAA-138 / DSM 3043 / CIP 106854 / NCIMB 13768 / 1H11) protein is Large ribosomal subunit protein uL1.